Reading from the N-terminus, the 288-residue chain is 4-diphosphocytidyl-2-C-methyl-D-erythritol kinase (288 aa).

Lys-11 is a catalytic residue. An ATP-binding site is contributed by 95–105 (PVAAGMAGGSS). The active site involves Asp-137.

It belongs to the GHMP kinase family. IspE subfamily.

It carries out the reaction 4-CDP-2-C-methyl-D-erythritol + ATP = 4-CDP-2-C-methyl-D-erythritol 2-phosphate + ADP + H(+). The protein operates within isoprenoid biosynthesis; isopentenyl diphosphate biosynthesis via DXP pathway; isopentenyl diphosphate from 1-deoxy-D-xylulose 5-phosphate: step 3/6. Its function is as follows. Catalyzes the phosphorylation of the position 2 hydroxy group of 4-diphosphocytidyl-2C-methyl-D-erythritol. The protein is 4-diphosphocytidyl-2-C-methyl-D-erythritol kinase of Lachnospira eligens (strain ATCC 27750 / DSM 3376 / VPI C15-48 / C15-B4) (Eubacterium eligens).